The chain runs to 82 residues: MVFLLCFFLVADVSYGINGDCELPKVVGFCRARLPRYYYNSSSRRCEKFNYGGCGGNANNFHTLEECEKVCGVRSRDSPKEN.

A signal peptide spans 1-16 (MVFLLCFFLVADVSYG). Residues 21 to 71 (CELPKVVGFCRARLPRYYYNSSSRRCEKFNYGGCGGNANNFHTLEECEKVC) enclose the BPTI/Kunitz inhibitor domain. Intrachain disulfides connect Cys21/Cys71, Cys30/Cys54, and Cys46/Cys67. Residues 76 to 82 (RDSPKEN) constitute a propeptide that is removed on maturation.

It belongs to the venom Kunitz-type family. Sea anemone type 2 potassium channel toxin subfamily.

The protein localises to the secreted. The protein resides in the nematocyst. In terms of biological role, serine protease inhibitor that inhibits both tissue and plasma kallikreins. Has hemolytic activity. Inhibits voltage-gated potassium channels (Kv). The sequence is that of U-actitoxin-Avd3q from Anemonia viridis (Snakelocks anemone).